A 501-amino-acid chain; its full sequence is Dihydrolipoyl dehydrogenase, mitochondrial (501 aa).

The N-terminal 31 residues, 1–31 (MAMANLARRKGYSLLSSETLRYSFSLRSRAF), are a transit peptide targeting the mitochondrion. Residues 67–76 (EKRGALGGTC), K85, G149, and 178–180 (TGS) contribute to the FAD site. C76 and C81 are disulfide-bonded. Residues 215–222 (GAGYIGLE), E238, V272, and G307 each bind NAD(+). FAD contacts are provided by residues D348 and 354 to 357 (MLAH). H480 serves as the catalytic Proton acceptor.

This sequence belongs to the class-I pyridine nucleotide-disulfide oxidoreductase family. In terms of assembly, homodimer. FAD is required as a cofactor.

It is found in the mitochondrion matrix. The enzyme catalyses N(6)-[(R)-dihydrolipoyl]-L-lysyl-[protein] + NAD(+) = N(6)-[(R)-lipoyl]-L-lysyl-[protein] + NADH + H(+). In terms of biological role, lipoamide dehydrogenase is a component of the glycine cleavage system as well as of the alpha-ketoacid dehydrogenase complexes. The pyruvate dehydrogenase complex contains multiple copies of three enzymatic components: pyruvate dehydrogenase (E1), dihydrolipoamide acetyltransferase (E2) and lipoamide dehydrogenase (E3). This Pisum sativum (Garden pea) protein is Dihydrolipoyl dehydrogenase, mitochondrial (LPD).